Here is a 361-residue protein sequence, read N- to C-terminus: MIERVRTDLYRIPLPTRLTDSTHGAMMDFELITVRIEDSDGATGLGYTYTVNHGGAAVATMVDKDLRGCLLGADAEQIEKIWQSMWWRLHYAGRGGHATSAISAVDIALWDLKGIRARTPLWKLFGGYDPVVPVYAGGIDLELPVADLKTQADRFLAGGFRAIKMKVGRPDLKEDVDRVSALREHLGDSFPLMVDANMKWTVDGAIRAARALAPFDLHWIEEPTIPDDLVGNARIVRESGHTIAGGENLHTLYDFHNAVRAGSLTLPEPDVSNIGGYTTFRKVAALAEANNMLLTSHGVHDLTVHALASVPHRTYMEAHGFGLHAYMAEPMAVTDGCVSAPDRPGHGVVLDFERLGRLAVG.

Catalysis depends on Lys166, which acts as the Proton acceptor. Residues Asp195, Glu221, and Glu247 each contribute to the Mg(2+) site. The active-site Proton donor/acceptor is the His297.

Belongs to the mandelate racemase/muconate lactonizing enzyme family. Requires Mg(2+) as cofactor.

The catalysed reaction is 3,6-anhydro-L-galactonate = 2-dehydro-3-deoxy-L-galactonate. Its function is as follows. Involved in the degradation of 3,6-anhydro-L-galactose, which is the major monomeric sugar of red macroalgae. Catalyzes the isomerization of 3,6-anhydrogalactonate (AHGA) to 2-keto-3-deoxy-galactonate (KDGal). This is 3,6-anhydro-alpha-L-galactonate cycloisomerase from Streptomyces coelicolor (strain ATCC BAA-471 / A3(2) / M145).